The following is a 500-amino-acid chain: Galactose/methyl galactoside import ATP-binding protein MglA (500 aa).

2 ABC transporter domains span residues 8–243 (LEME…VGRD) and 257–500 (EMIL…AKYL). 40–47 (GENGAGKS) is a binding site for ATP.

The protein belongs to the ABC transporter superfamily. Galactose/methyl galactoside importer (TC 3.A.1.2.3) family. As to quaternary structure, the complex is composed of one ATP-binding protein (MglA), two transmembrane proteins (MglC) and a solute-binding protein (MglB).

The protein resides in the cell inner membrane. The enzyme catalyses D-galactose(out) + ATP + H2O = D-galactose(in) + ADP + phosphate + H(+). It carries out the reaction methyl beta-D-galactoside(out) + ATP + H2O = methyl beta-D-galactoside(in) + ADP + phosphate + H(+). Its function is as follows. Part of the ABC transporter complex MglABC involved in galactose/methyl galactoside import. Responsible for energy coupling to the transport system. This is Galactose/methyl galactoside import ATP-binding protein MglA from Fusobacterium nucleatum subsp. nucleatum (strain ATCC 25586 / DSM 15643 / BCRC 10681 / CIP 101130 / JCM 8532 / KCTC 2640 / LMG 13131 / VPI 4355).